We begin with the raw amino-acid sequence, 195 residues long: Cysteine/O-acetylserine efflux protein (195 aa).

Residues 1–7 (MTPTLLS) lie on the Periplasmic side of the membrane. A helical membrane pass occupies residues 8–28 (AFWTYTLITAMTPGPNNILAL). The Cytoplasmic segment spans residues 29 to 46 (SSATTHGFHQSTRVLAGM). Residues 47-67 (SLGFLIVMLLCAGISFSLAVI) traverse the membrane as a helical segment. Residues 68 to 69 (DP) lie on the Periplasmic side of the membrane. A helical transmembrane segment spans residues 70–90 (AAVHLLSWAGAAYIVWLAWKI). Over 91 to 104 (ATSPTKEDGLQTKP) the chain is Cytoplasmic. A helical membrane pass occupies residues 105-125 (ISFWASFALQFVNVKIILYGV). Residues 126-141 (TALSTFVLPQTQALSW) are Periplasmic-facing. Residues 142-162 (IVGVSVLLAMIGTFGNVCWAL) form a helical membrane-spanning segment. Residues 163 to 176 (AGHLFQRLFRQYGR) are Cytoplasmic-facing. The helical transmembrane segment at 177–194 (QLNIVLALLLIYCAVRIF) threads the bilayer. Position 195 (Tyr195) is a topological domain, periplasmic.

The protein belongs to the Rht family.

The protein resides in the cell inner membrane. The catalysed reaction is O-acetyl-L-serine(in) = O-acetyl-L-serine(out). It catalyses the reaction L-cysteine(in) = L-cysteine(out). Functionally, exporter of O-acetylserine (OAS) and cysteine. The chain is Cysteine/O-acetylserine efflux protein (eamB) from Escherichia coli O157:H7.